The sequence spans 1004 residues: Presequence protease, mitochondrial (1004 aa).

A mitochondrion-targeting transit peptide spans 1-34 (MLRNAAAGARKAVTELSQFPKPGEKLHGFTLVRS). A Zn(2+)-binding site is contributed by His-84. The active-site Proton acceptor is the Glu-87. His-88 contacts Zn(2+). Glu-160 is an active-site residue. A Zn(2+)-binding site is contributed by Glu-188.

This sequence belongs to the peptidase M16 family. PreP subfamily. As to quaternary structure, monomer and homodimer; homodimerization is induced by binding of the substrate. Zn(2+) serves as cofactor.

It is found in the mitochondrion intermembrane space. Its subcellular location is the mitochondrion matrix. Functionally, degrades mitochondrial transit peptides after their cleavage in the intermembrane space or in the matrix, and presequence peptides; clearance of these peptides is required to keep the presequence processing machinery running. Preferentially cleaves the N-terminal side of paired basic amino acid residues. Also degrades other unstructured peptides. May function as an ATP-dependent peptidase as opposed to a metalloendopeptidase. The polypeptide is Presequence protease, mitochondrial (CYM1) (Gibberella zeae (strain ATCC MYA-4620 / CBS 123657 / FGSC 9075 / NRRL 31084 / PH-1) (Wheat head blight fungus)).